A 324-amino-acid chain; its full sequence is Zinc transporter ZIP1 (324 aa).

The Extracellular portion of the chain corresponds to 1-30 (MGPWGEPELLVWRPEAVASEPPVPVGLEVK). Residues 31 to 51 (LGALVLLLVLTLLCSLVPICV) traverse the membrane as a helical segment. Residues 52-68 (LRRPGANHEGSASRQKA) lie on the Cytoplasmic side of the membrane. The helical transmembrane segment at 69–89 (LSLVSCFAGGVFLATCLLDLL) threads the bilayer. At 90 to 104 (PDYLAAIDEALAALH) the chain is on the extracellular side. Residues 105–125 (VTLQFPLQEFILAMGFFLVLV) form a helical membrane-spanning segment. Residues 126–179 (MEQITLAYKEQSGPSPLEETRALLGTVNGGPQHWHDGPGVPQASGAPATPSALR) are Cytoplasmic-facing. Residues 180-200 (ACVLVFSLALHSVFEGLAVGL) form a helical membrane-spanning segment. The Extracellular segment spans residues 201-206 (QRDRAR). Residues 207-227 (AMELCLALLLHKGILAVSLSL) traverse the membrane as a helical segment. The Cytoplasmic segment spans residues 228–237 (RLLQSHLRAQ). A helical transmembrane segment spans residues 238–258 (VVAGCGILFSCMTPLGIGLGA). Residues 259-272 (ALAESAGPLHQLAQ) are Extracellular-facing. A helical membrane pass occupies residues 273-293 (SVLEGMAAGTFLYITFLEILP). Residues 294–303 (QELASSEQRI) lie on the Cytoplasmic side of the membrane. A helical membrane pass occupies residues 304–324 (LKVILLLAGFALLTGLLFIQI).

This sequence belongs to the ZIP transporter (TC 2.A.5) family. As to expression, ubiquitous. Expressed in most adult and fetal tissues including the epidermis.

Its subcellular location is the cell membrane. The protein resides in the endoplasmic reticulum membrane. It carries out the reaction Zn(2+)(in) = Zn(2+)(out). Its activity is regulated as follows. Inhibited by Ni(2+) ions. Fe(2+) ions do not inhibit zinc uptake. In terms of biological role, transporter for the divalent cation Zn(2+). Mediates the influx of Zn(2+) into cells from extracellular space. Functions as the major importer of zinc from circulating blood plasma into prostate cells. This is Zinc transporter ZIP1 from Homo sapiens (Human).